We begin with the raw amino-acid sequence, 428 residues long: C4-dicarboxylate transport protein (428 aa).

The next 9 helical transmembrane spans lie at 4-24 (SLFKSLYFQVLTAIAIGILLG), 44-64 (LIKMIIAPVIFCTVVTGIAGM), 76-96 (VALLYFEIVSTIALIIGLIIV), 142-162 (IGAFASGNILQVLLFAVLFGF), 184-204 (VIFGIINMIMRLAPIGAFGAM), 222-242 (LIICFYITCILFVVVVLGTIA), 289-309 (VVGLVIPTGYSFNLDGTSIYL), 326-346 (IFHQITLLVVLLLSSKGAAGV), and 352-372 (IVLAATISAVGHLPVAGLALI).

The protein belongs to the dicarboxylate/amino acid:cation symporter (DAACS) (TC 2.A.23) family.

The protein resides in the cell inner membrane. Its function is as follows. Responsible for the transport of dicarboxylates such as succinate, fumarate, and malate from the periplasm across the membrane. This is C4-dicarboxylate transport protein from Salmonella gallinarum (strain 287/91 / NCTC 13346).